We begin with the raw amino-acid sequence, 60 residues long: Phospholipase A2 (60 aa).

3 residues coordinate Ca(2+): Tyr-27, Gly-29, and Gly-31. A disulfide bridge links Cys-28 with Cys-44. His-47 is a catalytic residue. Asp-48 is a Ca(2+) binding site.

Ca(2+) serves as cofactor. In terms of tissue distribution, expressed by the venom gland.

Its subcellular location is the secreted. The enzyme catalyses a 1,2-diacyl-sn-glycero-3-phosphocholine + H2O = a 1-acyl-sn-glycero-3-phosphocholine + a fatty acid + H(+). Snake venom phospholipase A2 (PLA2) that displays mild but significant inhibition of mouse platelet aggregation induced by ADP and collagen. In vivo, induces edema in the foot pads and gastrocnemius muscles of mice but shows no myonecrotic or myotoxic activity. PA2 catalyzes the calcium-dependent hydrolysis of the 2-acyl groups in 3-sn-phosphoglycerides. This chain is Phospholipase A2, found in Lachesis muta rhombeata (Bushmaster).